The following is a 469-amino-acid chain: tRNA-2-methylthio-N(6)-dimethylallyladenosine synthase (469 aa).

Positions 22-142 constitute an MTTase N-terminal domain; sequence RKVFIKTYGC…LPEALRRAKE (121 aa). [4Fe-4S] cluster-binding residues include Cys-31, Cys-67, Cys-105, Cys-183, Cys-187, and Cys-190. One can recognise a Radical SAM core domain in the interval 169 to 401; that stretch reads RARGVTAFLT…QALLLKQQQE (233 aa). Positions 404–466 constitute a TRAM domain; it reads ESCIGKEIDL…NNSLFAERAE (63 aa).

This sequence belongs to the methylthiotransferase family. MiaB subfamily. As to quaternary structure, monomer. It depends on [4Fe-4S] cluster as a cofactor.

It is found in the cytoplasm. It catalyses the reaction N(6)-dimethylallyladenosine(37) in tRNA + (sulfur carrier)-SH + AH2 + 2 S-adenosyl-L-methionine = 2-methylsulfanyl-N(6)-dimethylallyladenosine(37) in tRNA + (sulfur carrier)-H + 5'-deoxyadenosine + L-methionine + A + S-adenosyl-L-homocysteine + 2 H(+). In terms of biological role, catalyzes the methylthiolation of N6-(dimethylallyl)adenosine (i(6)A), leading to the formation of 2-methylthio-N6-(dimethylallyl)adenosine (ms(2)i(6)A) at position 37 in tRNAs that read codons beginning with uridine. In Rhizobium leguminosarum bv. trifolii (strain WSM2304), this protein is tRNA-2-methylthio-N(6)-dimethylallyladenosine synthase.